The following is a 164-amino-acid chain: SsrA-binding protein (164 aa).

It belongs to the SmpB family.

Its subcellular location is the cytoplasm. In terms of biological role, required for rescue of stalled ribosomes mediated by trans-translation. Binds to transfer-messenger RNA (tmRNA), required for stable association of tmRNA with ribosomes. tmRNA and SmpB together mimic tRNA shape, replacing the anticodon stem-loop with SmpB. tmRNA is encoded by the ssrA gene; the 2 termini fold to resemble tRNA(Ala) and it encodes a 'tag peptide', a short internal open reading frame. During trans-translation Ala-aminoacylated tmRNA acts like a tRNA, entering the A-site of stalled ribosomes, displacing the stalled mRNA. The ribosome then switches to translate the ORF on the tmRNA; the nascent peptide is terminated with the 'tag peptide' encoded by the tmRNA and targeted for degradation. The ribosome is freed to recommence translation, which seems to be the essential function of trans-translation. In Gluconobacter oxydans (strain 621H) (Gluconobacter suboxydans), this protein is SsrA-binding protein.